Reading from the N-terminus, the 232-residue chain is Ribonuclease 3 (232 aa).

An RNase III domain is found at 5–134 (QTVLKNHFAI…FLGALLLDKD (130 aa)). Mg(2+) is bound at residue Glu-47. Asp-51 is a catalytic residue. Mg(2+)-binding residues include Asp-120 and Glu-123. Glu-123 is a catalytic residue. Positions 160–229 (DYKTHLQELL…AKNAVEKGLD (70 aa)) constitute a DRBM domain.

It belongs to the ribonuclease III family. As to quaternary structure, homodimer. It depends on Mg(2+) as a cofactor.

It localises to the cytoplasm. The enzyme catalyses Endonucleolytic cleavage to 5'-phosphomonoester.. Functionally, digests double-stranded RNA. Involved in the processing of primary rRNA transcript to yield the immediate precursors to the large and small rRNAs (23S and 16S). Processes some mRNAs, and tRNAs when they are encoded in the rRNA operon. Processes pre-crRNA and tracrRNA of type II CRISPR loci if present in the organism. The sequence is that of Ribonuclease 3 from Streptococcus pneumoniae (strain Hungary19A-6).